We begin with the raw amino-acid sequence, 368 residues long: Chaperone protein DnaJ (368 aa).

Residues 5–75 (DFYKILGVEK…TKRKQYDKFG (71 aa)) enclose the J domain. Residues 139–222 (GKEISQKLTK…CRGKTIVETK (84 aa)) form a CR-type zinc finger. Zn(2+) contacts are provided by Cys-152, Cys-155, Cys-169, Cys-172, Cys-196, Cys-199, Cys-210, and Cys-213. 4 CXXCXGXG motif repeats span residues 152–159 (CDNCKGSG), 169–176 (CYNCQGRG), 196–203 (CSVCLGSG), and 210–217 (CKKCRGKT).

This sequence belongs to the DnaJ family. As to quaternary structure, homodimer. The cofactor is Zn(2+).

Its subcellular location is the cytoplasm. Its function is as follows. Participates actively in the response to hyperosmotic and heat shock by preventing the aggregation of stress-denatured proteins and by disaggregating proteins, also in an autonomous, DnaK-independent fashion. Unfolded proteins bind initially to DnaJ; upon interaction with the DnaJ-bound protein, DnaK hydrolyzes its bound ATP, resulting in the formation of a stable complex. GrpE releases ADP from DnaK; ATP binding to DnaK triggers the release of the substrate protein, thus completing the reaction cycle. Several rounds of ATP-dependent interactions between DnaJ, DnaK and GrpE are required for fully efficient folding. Also involved, together with DnaK and GrpE, in the DNA replication of plasmids through activation of initiation proteins. The sequence is that of Chaperone protein DnaJ from Mesomycoplasma hyopneumoniae (strain 232) (Mycoplasma hyopneumoniae).